The following is a 475-amino-acid chain: Sulfate adenylyltransferase subunit 1 (475 aa).

Residues 25–239 (KSLLRFLTCG…EVLETVEIQR (215 aa)) enclose the tr-type G domain. Residues 34–41 (GSVDDGKS) are G1. 34-41 (GSVDDGKS) lines the GTP pocket. Residues 92–96 (GITID) form a G2 region. The segment at 113–116 (DTPG) is G3. GTP contacts are provided by residues 113–117 (DTPGH) and 168–171 (NKMD). Positions 168–171 (NKMD) are G4. Positions 206–208 (SAL) are G5.

The protein belongs to the TRAFAC class translation factor GTPase superfamily. Classic translation factor GTPase family. CysN/NodQ subfamily. Heterodimer composed of CysD, the smaller subunit, and CysN.

It catalyses the reaction sulfate + ATP + H(+) = adenosine 5'-phosphosulfate + diphosphate. It functions in the pathway sulfur metabolism; hydrogen sulfide biosynthesis; sulfite from sulfate: step 1/3. Functionally, with CysD forms the ATP sulfurylase (ATPS) that catalyzes the adenylation of sulfate producing adenosine 5'-phosphosulfate (APS) and diphosphate, the first enzymatic step in sulfur assimilation pathway. APS synthesis involves the formation of a high-energy phosphoric-sulfuric acid anhydride bond driven by GTP hydrolysis by CysN coupled to ATP hydrolysis by CysD. This is Sulfate adenylyltransferase subunit 1 from Shigella flexneri.